A 509-amino-acid chain; its full sequence is DEAD-box ATP-dependent RNA helicase CshA (509 aa).

The Q motif signature appears at 2–30; that stretch reads QNFKELGISDKTVQTLEAMGFKEPTPIQK. In terms of domain architecture, Helicase ATP-binding spans 33-203; it reads IPYALEGDDI…QQFMKAPKII (171 aa). 46–53 is a binding site for ATP; it reads AQTGTGKT. The DEAD box motif lies at 150-153; the sequence is DEAD. The Helicase C-terminal domain maps to 214-375; the sequence is QIDEYYTIVK…LRPPHRKEVL (162 aa). Basic residues-rich tracts occupy residues 440 to 459 and 467 to 482; these read ARKN…KRGN and RRSK…KKNQ. Residues 440 to 509 form a disordered region; it reads ARKNRSSKGG…KGRTFADHQK (70 aa). Positions 483–492 are enriched in basic and acidic residues; it reads KKFDRRDKQQ.

It belongs to the DEAD box helicase family. CshA subfamily. In terms of assembly, oligomerizes, may be a member of the RNA degradosome.

The protein resides in the cytoplasm. The catalysed reaction is ATP + H2O = ADP + phosphate + H(+). Functionally, DEAD-box RNA helicase possibly involved in RNA degradation. Unwinds dsRNA in both 5'- and 3'-directions, has RNA-dependent ATPase activity. The chain is DEAD-box ATP-dependent RNA helicase CshA from Staphylococcus epidermidis (strain ATCC 35984 / DSM 28319 / BCRC 17069 / CCUG 31568 / BM 3577 / RP62A).